We begin with the raw amino-acid sequence, 89 residues long: Putative regulatory protein CYB_0055 (89 aa).

This sequence belongs to the RemA family.

The sequence is that of Putative regulatory protein CYB_0055 from Synechococcus sp. (strain JA-2-3B'a(2-13)) (Cyanobacteria bacterium Yellowstone B-Prime).